Consider the following 784-residue polypeptide: ATP-dependent 6-phosphofructokinase, platelet type (784 aa).

Met-1 is modified (N-acetylmethionine). Residues 1 to 399 form an N-terminal catalytic PFK domain 1 region; the sequence is MDADDSRAPK…NLNTYKRLAI (399 aa). Phosphoserine is present on residues Ser-6, Ser-12, and Ser-21. ATP is bound by residues Gly-34, 97–98, and 127–130; these read RC and GDGS. Residue Asp-128 coordinates Mg(2+). Position 142 is a phosphoserine (Ser-142). Residues 173 to 175, Arg-210, 217 to 219, Glu-273, Arg-301, and 307 to 310 each bind substrate; these read SID, MGR, and HVQR. Asp-175 functions as the Proton acceptor in the catalytic mechanism. A Phosphoserine modification is found at Ser-386. N6-acetyllysine is present on Lys-395. The interval 400-411 is interdomain linker; that stretch reads KLPDDQIPKTNC. The interval 412–784 is C-terminal regulatory PFK domain 2; sequence NVAVINVGAP…QLEHVQPWSV (373 aa). Residue Arg-481 participates in beta-D-fructose 2,6-bisphosphate binding. An N6-acetyllysine modification is found at Lys-486. Beta-D-fructose 2,6-bisphosphate-binding positions include 538–542, Arg-576, 583–585, and Glu-639; these read TVSNN and MGG. O-linked (GlcNAc) serine glycosylation occurs at Ser-540. A Phosphotyrosine modification is found at Tyr-651. Beta-D-fructose 2,6-bisphosphate-binding positions include Arg-665 and 671 to 674; that span reads HMQQ. Lys-688 is modified (N6-acetyllysine). Arg-744 is a beta-D-fructose 2,6-bisphosphate binding site. Ser-783 bears the Phosphoserine mark.

This sequence belongs to the phosphofructokinase type A (PFKA) family. ATP-dependent PFK group I subfamily. Eukaryotic two domain clade 'E' sub-subfamily. Homo- and heterotetramers. Phosphofructokinase (PFK) enzyme functions as a tetramer composed of different combinations of 3 types of subunits, called PFKM (where M stands for Muscle), PFKL (Liver) and PFKP (Platelet). The composition of the PFK tetramer differs according to the tissue type it is present in. In muscles, it is composed of 4 PFKM subunits (also called M4). In the liver, the predominant form is a tetramer of PFKL subunits (L4). In erythrocytes, both PFKM and PFKL subunits randomly tetramerize to form M4, L4 and other combinations (ML3, M2L2, M3L). In platelets, brain and fibroblasts, PFK contains a higher proportion of PFKP subunits. The kinetic and regulatory properties of the tetrameric enzyme are dependent on the subunit composition, hence can vary across tissues. Interacts with ATG4B; promoting phosphorylation of ATG4B. The cofactor is Mg(2+). Post-translationally, phosphorylation at Ser-386 promotes interaction with ATG4B. GlcNAcylation decreases enzyme activity.

The protein localises to the cytoplasm. The enzyme catalyses beta-D-fructose 6-phosphate + ATP = beta-D-fructose 1,6-bisphosphate + ADP + H(+). The protein operates within carbohydrate degradation; glycolysis; D-glyceraldehyde 3-phosphate and glycerone phosphate from D-glucose: step 3/4. Allosterically activated by ADP, AMP, or fructose 2,6-bisphosphate, and allosterically inhibited by ATP or citrate. In terms of biological role, catalyzes the phosphorylation of D-fructose 6-phosphate to fructose 1,6-bisphosphate by ATP, the first committing step of glycolysis. The polypeptide is ATP-dependent 6-phosphofructokinase, platelet type (PFKP) (Homo sapiens (Human)).